A 244-amino-acid chain; its full sequence is NAD(P)H-hydrate epimerase (244 aa).

Positions 35–240 (IREIDSLAME…SIGVPLELLR (206 aa)) constitute a YjeF N-terminal domain. A (6S)-NADPHX-binding site is contributed by 82–86 (NNGGD). K(+) contacts are provided by Asn-83 and Asp-150. (6S)-NADPHX contacts are provided by residues 154–160 (GTGAKPP), Tyr-165, and Asp-183. Thr-186 is a binding site for K(+).

Belongs to the NnrE/AIBP family. The cofactor is K(+).

The catalysed reaction is (6R)-NADHX = (6S)-NADHX. It catalyses the reaction (6R)-NADPHX = (6S)-NADPHX. In terms of biological role, catalyzes the epimerization of the S- and R-forms of NAD(P)HX, a damaged form of NAD(P)H that is a result of enzymatic or heat-dependent hydration. This is a prerequisite for the S-specific NAD(P)H-hydrate dehydratase to allow the repair of both epimers of NAD(P)HX. In Rhodopirellula baltica (strain DSM 10527 / NCIMB 13988 / SH1), this protein is NAD(P)H-hydrate epimerase.